Here is a 370-residue protein sequence, read N- to C-terminus: MKFIDEARIEVIAGDGGDGSASMRREKFVPFGGPDGGDGGRGGSVYAIADRNINTLIDYRYAKKHLARNGENGRGSDCYGKGGDDVTLRMPVGTIISDMDTGELIADLTEHDQQVMLAQGGSGGLGNLHFKSSTNRAPRQKTDGKPGERRMLRLELKVLADVGLLGMPNAGKSTFISSVSNARPKIADYPFTTLAPNLGVVRVGPSKSFVIADIPGLIEGAAEGAGLGHQFLRHLQRTGVLLHLVDLAPFDESVDPVAEATAIVGELRKYDEALYEKPRWLVLNKLDMVPEDERKARVADFLERFEWDGPVFEISALTGQGCEALCYAIYDYLAEHSDAHRAAEAEDLAADVRFRDEPPAKGGAAPGDDA.

Residues 1-159 (MKFIDEARIE…RMLRLELKVL (159 aa)) form the Obg domain. The tract at residues 127 to 146 (NLHFKSSTNRAPRQKTDGKP) is disordered. The 175-residue stretch at 160 to 334 (ADVGLLGMPN…LCYAIYDYLA (175 aa)) folds into the OBG-type G domain. Residues 166–173 (GMPNAGKS), 191–195 (FTTLA), 213–216 (DIPG), 284–287 (NKLD), and 315–317 (SAL) each bind GTP. Residues serine 173 and threonine 193 each coordinate Mg(2+).

This sequence belongs to the TRAFAC class OBG-HflX-like GTPase superfamily. OBG GTPase family. In terms of assembly, monomer. Mg(2+) serves as cofactor.

Its subcellular location is the cytoplasm. In terms of biological role, an essential GTPase which binds GTP, GDP and possibly (p)ppGpp with moderate affinity, with high nucleotide exchange rates and a fairly low GTP hydrolysis rate. Plays a role in control of the cell cycle, stress response, ribosome biogenesis and in those bacteria that undergo differentiation, in morphogenesis control. The polypeptide is GTPase Obg (Burkholderia lata (strain ATCC 17760 / DSM 23089 / LMG 22485 / NCIMB 9086 / R18194 / 383)).